The following is a 481-amino-acid chain: NADH-quinone oxidoreductase subunit N (481 aa).

14 helical membrane passes run 11 to 31, 38 to 58, 74 to 94, 103 to 123, 128 to 148, 163 to 183, 208 to 228, 241 to 261, 272 to 292, 300 to 322, 332 to 352, 368 to 388, 404 to 424, and 450 to 470; these read ALPEVALLSLLVLLLPADLWA, WTHYGALATVAVTAAVQLAVW, GMSRLAKMVLYALTFVLFVYA, IFKGEFYTLSLFALLGMSVMV, FLTAYIGLELLSLALYALIAL, FVLGALASGLLLYGISMVYGA, LGLVFIVVAVAFKLGAVPFHM, VTALVGTAPKIAAVVFAFRIL, WSLMFALLAAASLLVGNLAAI, MLAYSTVSHMGFILLAFMAGAVG, TYALMAAAGFGVLMVLSDGDN, VWLAFLMLLVMFSMAGIPPLM, GYVWLSVFAVVMSLVGAFYYL, and SLLSVNALLLVLWGIMPQTVI.

This sequence belongs to the complex I subunit 2 family. NDH-1 is composed of 14 different subunits. Subunits NuoA, H, J, K, L, M, N constitute the membrane sector of the complex.

The protein localises to the cell inner membrane. The enzyme catalyses a quinone + NADH + 5 H(+)(in) = a quinol + NAD(+) + 4 H(+)(out). NDH-1 shuttles electrons from NADH, via FMN and iron-sulfur (Fe-S) centers, to quinones in the respiratory chain. The immediate electron acceptor for the enzyme in this species is believed to be ubiquinone. Couples the redox reaction to proton translocation (for every two electrons transferred, four hydrogen ions are translocated across the cytoplasmic membrane), and thus conserves the redox energy in a proton gradient. In Neisseria gonorrhoeae (strain ATCC 700825 / FA 1090), this protein is NADH-quinone oxidoreductase subunit N.